A 348-amino-acid polypeptide reads, in one-letter code: Protein RecA (348 aa).

65 to 72 (GPESSGKT) provides a ligand contact to ATP.

This sequence belongs to the RecA family.

The protein resides in the cytoplasm. In terms of biological role, can catalyze the hydrolysis of ATP in the presence of single-stranded DNA, the ATP-dependent uptake of single-stranded DNA by duplex DNA, and the ATP-dependent hybridization of homologous single-stranded DNAs. It interacts with LexA causing its activation and leading to its autocatalytic cleavage. In Enterococcus gallinarum, this protein is Protein RecA.